The following is a 354-amino-acid chain: Uroporphyrinogen decarboxylase (354 aa).

Residues 27 to 31 (RQAGR), aspartate 77, tyrosine 153, threonine 208, and histidine 326 contribute to the substrate site.

This sequence belongs to the uroporphyrinogen decarboxylase family. Homodimer.

It localises to the cytoplasm. The catalysed reaction is uroporphyrinogen III + 4 H(+) = coproporphyrinogen III + 4 CO2. The protein operates within porphyrin-containing compound metabolism; protoporphyrin-IX biosynthesis; coproporphyrinogen-III from 5-aminolevulinate: step 4/4. In terms of biological role, catalyzes the decarboxylation of four acetate groups of uroporphyrinogen-III to yield coproporphyrinogen-III. The polypeptide is Uroporphyrinogen decarboxylase (Neisseria meningitidis serogroup C / serotype 2a (strain ATCC 700532 / DSM 15464 / FAM18)).